A 993-amino-acid chain; its full sequence is Ephrin type-A receptor 7 (993 aa).

Positions 1 to 27 (MVLRSRLPPWIMLCSVWLLRFAHTGEA) are cleaved as a signal peptide. Residues 28-550 (QAAKEVILLD…TAVSSEQNPV (523 aa)) lie on the Extracellular side of the membrane. Positions 32-210 (EVILLDSKAQ…YYKKCWSIIE (179 aa)) constitute an Eph LBD domain. Fibronectin type-III domains follow at residues 331-441 (PPSA…TGQA) and 442-537 (APSQ…TLEE). 2 N-linked (GlcNAc...) asparagine glycosylation sites follow: asparagine 343 and asparagine 410. The helical transmembrane segment at 551–571 (IIIAVVAVAGTIILVFMVFGF) threads the bilayer. At 572-993 (IIGRRHCGYS…LHLHGTGIQV (422 aa)) the chain is on the cytoplasmic side. Phosphotyrosine; by autocatalysis occurs at positions 603 and 609. One can recognise a Protein kinase domain in the interval 628 to 889 (IKIERVIGAG…QIVGILDKMI (262 aa)). ATP contacts are provided by residues 634–642 (IGAGEFGEV) and lysine 660. Residue aspartate 753 is the Proton acceptor of the active site. Phosphotyrosine; by autocatalysis occurs at positions 786 and 935. Residues 918–982 (TTFCSVGEWL…MSSIQTMRAQ (65 aa)) enclose the SAM domain. The short motif at 991-993 (IQV) is the PDZ-binding element.

The protein belongs to the protein kinase superfamily. Tyr protein kinase family. Ephrin receptor subfamily. As to quaternary structure, heterotetramer upon binding of the ligand. The heterotetramer is composed of an ephrin dimer and a receptor dimer. Oligomerization is probably required to induce biological responses. In terms of processing, phosphorylated.

The protein localises to the cell membrane. It carries out the reaction L-tyrosyl-[protein] + ATP = O-phospho-L-tyrosyl-[protein] + ADP + H(+). In terms of biological role, receptor tyrosine kinase which binds promiscuously GPI-anchored ephrin-A family ligands residing on adjacent cells, leading to contact-dependent bidirectional signaling into neighboring cells. The signaling pathway downstream of the receptor is referred to as forward signaling while the signaling pathway downstream of the ephrin ligand is referred to as reverse signaling. Among GPI-anchored ephrin-A ligands, EFNA5 is a cognate/functional ligand for EPHA7 and their interaction regulates brain development modulating cell-cell adhesion and repulsion. Has a repellent activity on axons and is for instance involved in the guidance of corticothalamic axons and in the proper topographic mapping of retinal axons to the colliculus. May also regulate brain development through a caspase(CASP3)-dependent proapoptotic activity. Forward signaling may result in activation of components of the ERK signaling pathway including MAP2K1, MAP2K2, MAPK1 and MAPK3 which are phosphorylated upon activation of EPHA7. In Gallus gallus (Chicken), this protein is Ephrin type-A receptor 7 (EPHA7).